Here is a 208-residue protein sequence, read N- to C-terminus: Imidazole glycerol phosphate synthase subunit HisH (208 aa).

The Glutamine amidotransferase type-1 domain occupies 1 to 206; that stretch reads MIVIIDYDTG…KEVTYSCKSS (206 aa). The Nucleophile role is filled by Cys79. Catalysis depends on residues His181 and Glu183.

In terms of assembly, heterodimer of HisH and HisF.

It localises to the cytoplasm. The enzyme catalyses 5-[(5-phospho-1-deoxy-D-ribulos-1-ylimino)methylamino]-1-(5-phospho-beta-D-ribosyl)imidazole-4-carboxamide + L-glutamine = D-erythro-1-(imidazol-4-yl)glycerol 3-phosphate + 5-amino-1-(5-phospho-beta-D-ribosyl)imidazole-4-carboxamide + L-glutamate + H(+). It carries out the reaction L-glutamine + H2O = L-glutamate + NH4(+). It functions in the pathway amino-acid biosynthesis; L-histidine biosynthesis; L-histidine from 5-phospho-alpha-D-ribose 1-diphosphate: step 5/9. Its function is as follows. IGPS catalyzes the conversion of PRFAR and glutamine to IGP, AICAR and glutamate. The HisH subunit catalyzes the hydrolysis of glutamine to glutamate and ammonia as part of the synthesis of IGP and AICAR. The resulting ammonia molecule is channeled to the active site of HisF. The sequence is that of Imidazole glycerol phosphate synthase subunit HisH from Listeria monocytogenes serotype 4a (strain HCC23).